We begin with the raw amino-acid sequence, 427 residues long: Gamma-glutamyl phosphate reductase (427 aa).

The protein belongs to the gamma-glutamyl phosphate reductase family.

It is found in the cytoplasm. It catalyses the reaction L-glutamate 5-semialdehyde + phosphate + NADP(+) = L-glutamyl 5-phosphate + NADPH + H(+). It functions in the pathway amino-acid biosynthesis; L-proline biosynthesis; L-glutamate 5-semialdehyde from L-glutamate: step 2/2. Functionally, catalyzes the NADPH-dependent reduction of L-glutamate 5-phosphate into L-glutamate 5-semialdehyde and phosphate. The product spontaneously undergoes cyclization to form 1-pyrroline-5-carboxylate. This chain is Gamma-glutamyl phosphate reductase, found in Rhodospirillum rubrum (strain ATCC 11170 / ATH 1.1.1 / DSM 467 / LMG 4362 / NCIMB 8255 / S1).